An 82-amino-acid polypeptide reads, in one-letter code: Small ribosomal subunit protein bS16 (82 aa).

It belongs to the bacterial ribosomal protein bS16 family.

This chain is Small ribosomal subunit protein bS16, found in Clostridium botulinum (strain ATCC 19397 / Type A).